Reading from the N-terminus, the 158-residue chain is Transcription elongation factor GreA (158 aa).

Residues 8-74 (TKGGYNKLKD…TLERVLSTAT (67 aa)) are a coiled coil.

Belongs to the GreA/GreB family.

In terms of biological role, necessary for efficient RNA polymerase transcription elongation past template-encoded arresting sites. The arresting sites in DNA have the property of trapping a certain fraction of elongating RNA polymerases that pass through, resulting in locked ternary complexes. Cleavage of the nascent transcript by cleavage factors such as GreA or GreB allows the resumption of elongation from the new 3'terminus. GreA releases sequences of 2 to 3 nucleotides. The chain is Transcription elongation factor GreA from Chloroherpeton thalassium (strain ATCC 35110 / GB-78).